We begin with the raw amino-acid sequence, 430 residues long: GTPase Obg (430 aa).

Residues 1–158 (MFVDQVKISL…LDVSLELKLL (158 aa)) enclose the Obg domain. A disordered region spans residues 118–145 (KGGRGGRGNSRFATPRNPAPDFSEKGEP). The region spanning 159–329 (ADVGLVGFPS…LLYAIADKLE (171 aa)) is the OBG-type G domain. GTP is bound by residues 165–172 (GFPSVGKS), 190–194 (FTTIK), 212–215 (DLPG), 282–285 (NKMD), and 310–312 (STI). 2 residues coordinate Mg(2+): Ser-172 and Thr-192. The 79-residue stretch at 352-430 (KHTPSQDKFT…ILGGEFEFVE (79 aa)) folds into the OCT domain.

Belongs to the TRAFAC class OBG-HflX-like GTPase superfamily. OBG GTPase family. In terms of assembly, monomer. It depends on Mg(2+) as a cofactor.

It localises to the cytoplasm. Its function is as follows. An essential GTPase which binds GTP, GDP and possibly (p)ppGpp with moderate affinity, with high nucleotide exchange rates and a fairly low GTP hydrolysis rate. Plays a role in control of the cell cycle, stress response, ribosome biogenesis and in those bacteria that undergo differentiation, in morphogenesis control. The polypeptide is GTPase Obg (Staphylococcus aureus (strain COL)).